A 128-amino-acid chain; its full sequence is Ferric uptake regulation protein homolog (128 aa).

Belongs to the Fur family.

In Archaeoglobus fulgidus (strain ATCC 49558 / DSM 4304 / JCM 9628 / NBRC 100126 / VC-16), this protein is Ferric uptake regulation protein homolog.